A 301-amino-acid chain; its full sequence is Probable alpha-L-glutamate ligase (301 aa).

Residues 104–287 (LQLMSRKGLG…VASMIIKHIE (184 aa)) form the ATP-grasp domain. Residues lysine 141, 178 to 179 (EY), aspartate 187, and 211 to 213 (RSN) each bind ATP. Mg(2+) is bound by residues aspartate 248, glutamate 260, and asparagine 262. Mn(2+)-binding residues include aspartate 248, glutamate 260, and asparagine 262.

It belongs to the RimK family. It depends on Mg(2+) as a cofactor. Requires Mn(2+) as cofactor.

The polypeptide is Probable alpha-L-glutamate ligase (Marinomonas sp. (strain MWYL1)).